The following is a 402-amino-acid chain: Exodeoxyribonuclease 7 large subunit (402 aa).

This sequence belongs to the XseA family. As to quaternary structure, heterooligomer composed of large and small subunits.

It is found in the cytoplasm. It carries out the reaction Exonucleolytic cleavage in either 5'- to 3'- or 3'- to 5'-direction to yield nucleoside 5'-phosphates.. Its function is as follows. Bidirectionally degrades single-stranded DNA into large acid-insoluble oligonucleotides, which are then degraded further into small acid-soluble oligonucleotides. The chain is Exodeoxyribonuclease 7 large subunit from Moorella thermoacetica (strain ATCC 39073 / JCM 9320).